Reading from the N-terminus, the 302-residue chain is tRNA pseudouridine synthase B (302 aa).

The active-site Nucleophile is the Asp-45.

This sequence belongs to the pseudouridine synthase TruB family. Type 1 subfamily.

The enzyme catalyses uridine(55) in tRNA = pseudouridine(55) in tRNA. In terms of biological role, responsible for synthesis of pseudouridine from uracil-55 in the psi GC loop of transfer RNAs. The sequence is that of tRNA pseudouridine synthase B from Francisella tularensis subsp. tularensis (strain FSC 198).